Consider the following 323-residue polypeptide: Beta-ketoacyl-[acyl-carrier-protein] synthase III (323 aa).

Active-site residues include C114 and H250. The ACP-binding stretch occupies residues 251–255 (QANKR). The active site involves N280.

This sequence belongs to the thiolase-like superfamily. FabH family. Homodimer.

Its subcellular location is the cytoplasm. It carries out the reaction malonyl-[ACP] + acetyl-CoA + H(+) = 3-oxobutanoyl-[ACP] + CO2 + CoA. It functions in the pathway lipid metabolism; fatty acid biosynthesis. Functionally, catalyzes the condensation reaction of fatty acid synthesis by the addition to an acyl acceptor of two carbons from malonyl-ACP. Catalyzes the first condensation reaction which initiates fatty acid synthesis and may therefore play a role in governing the total rate of fatty acid production. Possesses both acetoacetyl-ACP synthase and acetyl transacylase activities. Its substrate specificity determines the biosynthesis of branched-chain and/or straight-chain of fatty acids. This Hyphomonas neptunium (strain ATCC 15444) protein is Beta-ketoacyl-[acyl-carrier-protein] synthase III.